The chain runs to 453 residues: AP-4 complex subunit mu-1 (453 aa).

Residues 184–452 (KNEVFLDVVE…LSHSNAYVIR (269 aa)) form the MHD domain. Positions 383-403 (PGLQGPPSRGPSPSAPPLGLG) are disordered.

Belongs to the adaptor complexes medium subunit family. As to quaternary structure, adaptor protein complex 4 (AP-4) is a heterotetramer composed of two large adaptins (epsilon-type subunit AP4E1 and beta-type subunit AP4B1), a medium adaptin (mu-type subunit AP4M1) and a small adaptin (sigma-type AP4S1). Interacts with tyrosine-based sorting signals on the cytoplasmic tail of cargo proteins such as APP, ATG9A, LAMP2 and NAGPA. Interacts with the C-terminal domain of GRID2. Interacts with GRIA1 and GRIA2; the interaction is indirect via CACNG3. Interacts with CACNG3; CACNG3 associates GRIA1 and GRIA2 with the adaptor protein complex 4 (AP-4) to target them to the somatodendritic compartment of neurons. Interacts with HOOK1 and HOOK2; the interactions are direct, mediate the interaction between FTS-Hook-FHIP (FHF) complex and AP-4 and the perinuclear distribution of AP-4. High levels in the olfactory bulb, the cerebral cortex, the granule and Purkinje cell layers of the cerebellar cortex and the CA3 region of the hippocampus. Low levels found in molecular layer of cerebellum.

Its subcellular location is the golgi apparatus. It is found in the trans-Golgi network membrane. The protein resides in the early endosome. Component of the adaptor protein complex 4 (AP-4). Adaptor protein complexes are vesicle coat components involved both in vesicle formation and cargo selection. They control the vesicular transport of proteins in different trafficking pathways. AP-4 forms a non clathrin-associated coat on vesicles departing the trans-Golgi network (TGN) and may be involved in the targeting of proteins from the trans-Golgi network (TGN) to the endosomal-lysosomal system. It is also involved in protein sorting to the basolateral membrane in epithelial cells and the proper asymmetric localization of somatodendritic proteins in neurons. Within AP-4, the mu-type subunit AP4M1 is directly involved in the recognition and binding of tyrosine-based sorting signals found in the cytoplasmic part of cargos. The adaptor protein complex 4 (AP-4) may also recognize other types of sorting signal. The polypeptide is AP-4 complex subunit mu-1 (Rattus norvegicus (Rat)).